We begin with the raw amino-acid sequence, 223 residues long: Ribose-5-phosphate isomerase A (223 aa).

Residues 32–35 (TGST), 85–88 (DGAD), and 98–101 (KGGG) each bind substrate. The active-site Proton acceptor is the Glu-107. Residue Lys-125 coordinates substrate.

Belongs to the ribose 5-phosphate isomerase family. As to quaternary structure, homodimer.

The enzyme catalyses aldehydo-D-ribose 5-phosphate = D-ribulose 5-phosphate. Its pathway is carbohydrate degradation; pentose phosphate pathway; D-ribose 5-phosphate from D-ribulose 5-phosphate (non-oxidative stage): step 1/1. Its function is as follows. Catalyzes the reversible conversion of ribose-5-phosphate to ribulose 5-phosphate. This chain is Ribose-5-phosphate isomerase A, found in Pseudomonas aeruginosa (strain LESB58).